We begin with the raw amino-acid sequence, 409 residues long: Indian hedgehog protein (409 aa).

The signal sequence occupies residues 1 to 23 (MQLPKVVLLLCAAALLLSGAVRG). C24 carries the N-palmitoyl cysteine lipid modification. Positions 89, 90, 95, 125, 126, 129, and 131 each coordinate Ca(2+). Residues H140, D147, and H182 each coordinate Zn(2+). G197 is lipidated: Cholesterol glycine ester.

It belongs to the hedgehog family. As to quaternary structure, multimer. Interacts with BOC and CDON. Interacts with PTCH1. Interacts with glypican GPC3. In terms of processing, cholesterylation is required for N-product targeting to lipid rafts and multimerization. Post-translationally, the C-terminal domain displays an autoproteolysis activity and a cholesterol transferase activity. Both activities result in the cleavage of the full-length protein and covalent attachment of a cholesterol moiety to the C-terminal of the newly generated N-product. The N-product is the active species in both local and long-range signaling, whereas the C-product is degraded in the endoplasmic reticulum. N-palmitoylation by HHAT of N-product is required for indian hedgehog protein N-product multimerization and full activity. Expressed in the marginal zone at early gastrulation. At stage 14, expression begins in the neural plate with expression becoming more prominent in the anterodorsal area at neural tube closure. At this stage, also expressed diffusely in the somitic and pre-somitic mesoderm. By the early tadpole (stages 28-30), expression is widespread throughout anterior structures with highest levels in the otic vesicle, the eye, and the branchial arches.

The protein localises to the cell membrane. The protein resides in the endoplasmic reticulum membrane. It is found in the golgi apparatus membrane. Its subcellular location is the secreted. The enzyme catalyses glycyl-L-cysteinyl-[protein] + cholesterol + H(+) = [protein]-C-terminal glycyl cholesterol ester + N-terminal L-cysteinyl-[protein]. In terms of biological role, signal involved in the early induction and patterning of anterodorsal ectoderm, nervous system and somites. Induces ectopic cement gland formation in embryos. It is involved in the regulation of endochondral skeleton formation, and the development of retinal pigment epithelium (RPE), photoreceptors and periocular tissues. Functionally, the C-terminal part of the indian hedgehog protein precursor displays an autoproteolysis and a cholesterol transferase activity. Both activities result in the cleavage of the full-length protein into two parts followed by the covalent attachment of a cholesterol moiety to the C-terminal of the newly generated N-product. Both activities occur in the endoplasmic reticulum. The dually lipidated indian hedgehog protein N-product is a morphogen which is essential for a variety of patterning events during development. Binds to the patched (PTCH1) receptor, which functions in association with smoothened (SMO), to activate the transcription of target genes. Signal involved in the early induction and patterning of anterodorsal ectoderm, nervous system and somites. Induces ectopic cement gland formation in embryos. The sequence is that of Indian hedgehog protein from Xenopus laevis (African clawed frog).